Consider the following 334-residue polypeptide: MIVIPRYTIIKEKASSRIPEILDNLNLKNPLVITGKNTKKYNKDFDFIYYDEIETSDLENIKNYANDYDSIMGIGGGRPIDIGKLIAHKSKKPFLSVPTTASNDGIASPIVSLTQPSYMTEAPIAIIADIGIIKKSPKKLLSAGMGDIVSNITAVLDWELGKIEKSEKYSDSSGIFSKTIAIELMDYVLNSNLEEYPKKLVKALIGSGISIAIAHSSRPASGSEHLFSHALDIMKEKYDIDTDSLHGEQCGVGTLAIAQIYFEEKKLDIETFEMIKKSLKAVDAPITAKQLGFDDEIVIEALSSAHALRNRHTILRNGISKTEARKILEKSEII.

NAD(+) is bound by residues 77 to 81 and 99 to 102; these read GRPID and TTAS. A substrate-binding site is contributed by aspartate 104. Serine 108 contacts NAD(+). Aspartate 147 serves as a coordination point for substrate. 2 residues coordinate Zn(2+): aspartate 147 and histidine 225. A substrate-binding site is contributed by histidine 229. Histidine 246 contacts Zn(2+).

It belongs to the glycerol-1-phosphate dehydrogenase family. It depends on Zn(2+) as a cofactor.

The protein resides in the cytoplasm. The catalysed reaction is sn-glycerol 1-phosphate + NAD(+) = dihydroxyacetone phosphate + NADH + H(+). It catalyses the reaction sn-glycerol 1-phosphate + NADP(+) = dihydroxyacetone phosphate + NADPH + H(+). It functions in the pathway membrane lipid metabolism; glycerophospholipid metabolism. Catalyzes the NAD(P)H-dependent reduction of dihydroxyacetonephosphate (DHAP or glycerone phosphate) to glycerol 1-phosphate (G1P). The G1P thus generated is used as the glycerophosphate backbone of phospholipids in the cellular membranes of Archaea. In Methanococcus maripaludis (strain C5 / ATCC BAA-1333), this protein is Glycerol-1-phosphate dehydrogenase [NAD(P)+].